Reading from the N-terminus, the 210-residue chain is Probable glutathione peroxidase 8 (210 aa).

The chain crosses the membrane as a helical span at residues 13 to 35; the sequence is ASRAGLFKVLLSVALCMGSLYLL.

Belongs to the glutathione peroxidase family.

The protein localises to the membrane. It carries out the reaction 2 glutathione + H2O2 = glutathione disulfide + 2 H2O. The sequence is that of Probable glutathione peroxidase 8 (gpx8) from Danio rerio (Zebrafish).